The sequence spans 340 residues: MADTFVAKNWRDLIKPRRMEVDQDSATPTYGKFVAEPLERGFGTTLGNSLRRVLLSSLQGAAITTVKIEGVDHEFTTIPEVSEDVTDVVLNLKEVLLRMHTNETKTLRIEAEGPKEVKAGDIITDPDTEILNPGHHICTISEGGKLRMELTCRRGRGYTPANVNKVAGSPIGTIPIDSLFSPIRKVNYQVTNARVGQVTDFDKLSLEVWTDGSVSPQDAVAYAAKIIKEQLTVFVNFDETEEPVVAEAPKEEAKLNENLFRSVDELELSVRSANCLQQANIKSIGDLVQRTEAEMLKTKNFGRKSLKEIKEILAEMGLSLGMKLENWPPKQAPAPAQPKA.

Residues 1-238 (MADTFVAKNW…EQLTVFVNFD (238 aa)) are alpha N-terminal domain (alpha-NTD). Positions 253 to 340 (AKLNENLFRS…QAPAPAQPKA (88 aa)) are alpha C-terminal domain (alpha-CTD).

Belongs to the RNA polymerase alpha chain family. In terms of assembly, homodimer. The RNAP catalytic core consists of 2 alpha, 1 beta, 1 beta' and 1 omega subunit. When a sigma factor is associated with the core the holoenzyme is formed, which can initiate transcription.

The catalysed reaction is RNA(n) + a ribonucleoside 5'-triphosphate = RNA(n+1) + diphosphate. Its function is as follows. DNA-dependent RNA polymerase catalyzes the transcription of DNA into RNA using the four ribonucleoside triphosphates as substrates. This chain is DNA-directed RNA polymerase subunit alpha, found in Myxococcus xanthus (strain DK1622).